Consider the following 96-residue polypeptide: Beta-defensin 20 (96 aa).

The first 21 residues, methionine 1–proline 21, serve as a signal peptide directing secretion. 3 disulfides stabilise this stretch: cysteine 24-cysteine 52, cysteine 32-cysteine 46, and cysteine 36-cysteine 53.

It belongs to the beta-defensin family.

Its subcellular location is the secreted. Its function is as follows. Has antibacterial activity. This chain is Beta-defensin 20 (Defb20), found in Mus musculus (Mouse).